A 396-amino-acid polypeptide reads, in one-letter code: DNA polymerase IV (396 aa).

Residues 5-192 (IFHVDVNSAF…LPVGELFMVG (188 aa)) enclose the UmuC domain. Mg(2+) contacts are provided by Asp9 and Asp111. Glu112 is a catalytic residue.

It belongs to the DNA polymerase type-Y family. In terms of assembly, monomer. Mg(2+) is required as a cofactor.

The protein localises to the cytoplasm. It catalyses the reaction DNA(n) + a 2'-deoxyribonucleoside 5'-triphosphate = DNA(n+1) + diphosphate. Poorly processive, error-prone DNA polymerase involved in untargeted mutagenesis. Copies undamaged DNA at stalled replication forks, which arise in vivo from mismatched or misaligned primer ends. These misaligned primers can be extended by PolIV. Exhibits no 3'-5' exonuclease (proofreading) activity. May be involved in translesional synthesis, in conjunction with the beta clamp from PolIII. The chain is DNA polymerase IV from Clostridium acetobutylicum (strain ATCC 824 / DSM 792 / JCM 1419 / IAM 19013 / LMG 5710 / NBRC 13948 / NRRL B-527 / VKM B-1787 / 2291 / W).